The following is a 484-amino-acid chain: Toluene efflux pump outer membrane protein TtgC (484 aa).

The first 17 residues, Met-1–Gly-17, serve as a signal peptide directing secretion. A lipid anchor (N-palmitoyl cysteine) is attached at Cys-18. A lipid anchor (S-diacylglycerol cysteine) is attached at Cys-18.

This sequence belongs to the outer membrane factor (OMF) (TC 1.B.17) family.

It localises to the cell outer membrane. Its function is as follows. The outer membrane component of a constitutive organic solvent efflux system. Is involved in export of toluene, styrene, m-xylene, propylbenzene and ethylbenzene. Also exports AMP and the antibiotics carbenicillin, nalidixic acid, chloramphenicol and tetracycline. The chain is Toluene efflux pump outer membrane protein TtgC (ttgC) from Pseudomonas putida (strain DOT-T1E).